Reading from the N-terminus, the 317-residue chain is Malate dehydrogenase (317 aa).

Residues 15–20 (GSGNIG) and D39 contribute to the NAD(+) site. Residues R88 and R94 each coordinate substrate. NAD(+)-binding positions include N101 and 124–126 (VTN). Substrate-binding residues include N126 and R157. The active-site Proton acceptor is the H181.

Belongs to the LDH/MDH superfamily. MDH type 3 family.

It catalyses the reaction (S)-malate + NAD(+) = oxaloacetate + NADH + H(+). Functionally, catalyzes the reversible oxidation of malate to oxaloacetate. This chain is Malate dehydrogenase, found in Ehrlichia ruminantium (strain Gardel).